The sequence spans 92 residues: YcgL domain-containing protein Sama_1929 (92 aa).

The YcgL domain maps to 1-85 (MICAVYKSSR…PKDNLLTQHR (85 aa)).

This is YcgL domain-containing protein Sama_1929 from Shewanella amazonensis (strain ATCC BAA-1098 / SB2B).